The following is a 272-amino-acid chain: Nitrogenase iron protein (272 aa).

8-15 is a binding site for ATP; that stretch reads GKGGIGKS. [4Fe-4S] cluster is bound at residue cysteine 94. Residue arginine 97 is modified to ADP-ribosylarginine; by dinitrogenase reductase ADP-ribosyltransferase. Cysteine 129 is a [4Fe-4S] cluster binding site.

Belongs to the NifH/BchL/ChlL family. In terms of assembly, homodimer. Requires [4Fe-4S] cluster as cofactor. In terms of processing, the reversible ADP-ribosylation of Arg-97 inactivates the nitrogenase reductase and regulates nitrogenase activity.

It catalyses the reaction N2 + 8 reduced [2Fe-2S]-[ferredoxin] + 16 ATP + 16 H2O = H2 + 8 oxidized [2Fe-2S]-[ferredoxin] + 2 NH4(+) + 16 ADP + 16 phosphate + 6 H(+). In terms of biological role, the key enzymatic reactions in nitrogen fixation are catalyzed by the nitrogenase complex, which has 2 components: the iron protein and the molybdenum-iron protein. The polypeptide is Nitrogenase iron protein (Desulforamulus reducens (strain ATCC BAA-1160 / DSM 100696 / MI-1) (Desulfotomaculum reducens)).